Here is a 428-residue protein sequence, read N- to C-terminus: Adenylosuccinate synthetase (428 aa).

Residues 12–18 (GDEGKGK) and 40–42 (GHT) each bind GTP. Asp-13 serves as the catalytic Proton acceptor. Positions 13 and 40 each coordinate Mg(2+). Residues 13–16 (DEGK), 38–41 (NAGH), Thr-128, Arg-142, Gln-222, Thr-237, and Arg-301 contribute to the IMP site. The Proton donor role is filled by His-41. 297-303 (VNTGRAR) is a binding site for substrate. GTP contacts are provided by residues Arg-303, 329 to 331 (KLD), and 411 to 413 (STS).

It belongs to the adenylosuccinate synthetase family. In terms of assembly, homodimer. Mg(2+) serves as cofactor.

The protein resides in the cytoplasm. It catalyses the reaction IMP + L-aspartate + GTP = N(6)-(1,2-dicarboxyethyl)-AMP + GDP + phosphate + 2 H(+). It functions in the pathway purine metabolism; AMP biosynthesis via de novo pathway; AMP from IMP: step 1/2. Plays an important role in the de novo pathway of purine nucleotide biosynthesis. Catalyzes the first committed step in the biosynthesis of AMP from IMP. This is Adenylosuccinate synthetase from Caulobacter vibrioides (strain ATCC 19089 / CIP 103742 / CB 15) (Caulobacter crescentus).